The chain runs to 438 residues: ATP-dependent protease ATPase subunit HslU (438 aa).

ATP-binding positions include Val18, 60-65, Asp252, Glu317, and Arg389; that span reads GVGKTE.

It belongs to the ClpX chaperone family. HslU subfamily. As to quaternary structure, a double ring-shaped homohexamer of HslV is capped on each side by a ring-shaped HslU homohexamer. The assembly of the HslU/HslV complex is dependent on binding of ATP.

It is found in the cytoplasm. Its function is as follows. ATPase subunit of a proteasome-like degradation complex; this subunit has chaperone activity. The binding of ATP and its subsequent hydrolysis by HslU are essential for unfolding of protein substrates subsequently hydrolyzed by HslV. HslU recognizes the N-terminal part of its protein substrates and unfolds these before they are guided to HslV for hydrolysis. This chain is ATP-dependent protease ATPase subunit HslU, found in Saccharophagus degradans (strain 2-40 / ATCC 43961 / DSM 17024).